The sequence spans 80 residues: Defensin-like protein 51 (80 aa).

An N-terminal signal peptide occupies residues 1–27; sequence MGFTKILVTFFLVGLLVISSSPQNAIA. 4 cysteine pairs are disulfide-bonded: Cys39–Cys79, Cys43–Cys66, Cys52–Cys77, and Cys56–Cys78.

Belongs to the DEFL family.

It localises to the secreted. The chain is Defensin-like protein 51 (LCR48) from Arabidopsis thaliana (Mouse-ear cress).